Here is a 389-residue protein sequence, read N- to C-terminus: Tubby-like F-box protein 11 (389 aa).

The F-box domain maps to 36 to 82 (DYRWSEIPEELLREILIRVEAADGGGWPSRRSVVACAGVCRGWRLLM). Residues 250–289 (STMEPQGVASEPSEFPLLGTRSTLSRSQSKPLRSSSSHLK) form a disordered region. The segment covering 273–286 (LSRSQSKPLRSSSS) has biased composition (low complexity).

This sequence belongs to the TUB family. As to expression, ubiquitous.

The polypeptide is Tubby-like F-box protein 11 (Arabidopsis thaliana (Mouse-ear cress)).